A 783-amino-acid chain; its full sequence is MAQKRSHNHKDHTAKAIKRRKFNAATAKSSDDAAHDIVSVDQLDWKTVTLPDRLDDAEGFYGLEEIEGVDILRPSGGGEIKFKASKSKIKGILKNSTDKSGQPAEDWEEWSGFGDDSEDGDGTTLEAEKKAENHGKVNDRRTKTNNSNKEKESNKLPKDRGPRIKTDNGIKTGVSFAALQDEVEEDVDVSAWDSLDLSAELQTSLGRLKFSSPTPIQSACIPAVLQGHDVIGKASTGSGKTLAFGIPIVEYFLGKYRGGRAPTASEERESTKEPMALILSPTRELAHQLNKHLTDLVNHAPNTQVRIATVTGGLSIYKQQRLLADADIIIATPGRLWEVVGSMTGFLSKLKKIRFLVIDEADRLLSEGHFKEVEEILNAIDKVEITEEAYGERSEREPEPEPDEEKKAEPRQTLVFSATFHKGLQQKLSGKIRYRNDDLLDKKESMEYLLRKLNFREERPKFIDVNPISQMAQNLKEGLVQCAPMDKDLLLYTLLLYHPKHRTLVFTNSISAVRRLTQLLQNLNLPTFALHSSMAQKARLRSVERFSSLSSDPSSILVATDVAARGLDIKGIDLIVHYHIPRTADTYVHRSGRTARASASGKSILICAPEETTGVARLVAKIHSNKKDSSATESKMEKKVPLQSVDLDRRIIDRLRPRVTLAKKITESILAKEKLSSEDDWLRSAAEDLGVDYDSDEFAEQQSKGKGKGRGRGGGRQAREQKAASLSKAELAGLKAQLRELVSKKVNVGISEKYLTAGRVDVDALLRGEGNDAFLGHVEKLSF.

The span at 1–22 shows a compositional bias: basic residues; the sequence is MAQKRSHNHKDHTAKAIKRRKF. Disordered regions lie at residues 1–32 and 94–168; these read MAQK…SSDD and KNST…KTDN. Over residues 105-121 the composition is skewed to acidic residues; the sequence is EDWEEWSGFGDDSEDGD. Basic and acidic residues predominate over residues 126–168; sequence EAEKKAENHGKVNDRRTKTNNSNKEKESNKLPKDRGPRIKTDN. A Q motif motif is present at residues 190–218; it reads SAWDSLDLSAELQTSLGRLKFSSPTPIQS. The region spanning 221-438 is the Helicase ATP-binding domain; it reads IPAVLQGHDV…SGKIRYRNDD (218 aa). 234–241 contacts ATP; the sequence is ASTGSGKT. The DEAD box signature appears at 359–362; sequence DEAD. The segment at 388 to 410 is disordered; sequence EAYGERSEREPEPEPDEEKKAEP. Residues 490 to 648 form the Helicase C-terminal domain; that stretch reads LLYTLLLYHP…KVPLQSVDLD (159 aa). Residues 696 to 719 are disordered; the sequence is DEFAEQQSKGKGKGRGRGGGRQAR.

This sequence belongs to the DEAD box helicase family. DDX24/MAK5 subfamily.

The protein resides in the nucleus. Its subcellular location is the nucleolus. It catalyses the reaction ATP + H2O = ADP + phosphate + H(+). Its function is as follows. ATP-binding RNA helicase involved in the biogenesis of 60S ribosomal subunits and is required for the normal formation of 25S and 5.8S rRNAs. In Coccidioides immitis (strain RS) (Valley fever fungus), this protein is ATP-dependent RNA helicase MAK5 (MAK5).